The primary structure comprises 141 residues: Hemoglobin subunit alpha (141 aa).

The region spanning 1–141 (VLSSDDKCNV…VSSVLTSKYR (141 aa)) is the Globin domain. H58 provides a ligand contact to O2. Position 87 (H87) interacts with heme b.

The protein belongs to the globin family. In terms of assembly, heterotetramer of two alpha chains and two beta chains. As to expression, red blood cells.

Involved in oxygen transport from the lung to the various peripheral tissues. The protein is Hemoglobin subunit alpha (HBA) of Crocodylus niloticus (Nile crocodile).